A 107-amino-acid polypeptide reads, in one-letter code: Thioredoxin (107 aa).

In terms of domain architecture, Thioredoxin spans 2-107 (SVSQVTDASF…LASTLNKYIS (106 aa)). Active-site nucleophile residues include Cys-31 and Cys-34. A disulfide bond links Cys-31 and Cys-34.

This sequence belongs to the thioredoxin family.

The protein resides in the plastid. The protein localises to the chloroplast. Participates in various redox reactions through the reversible oxidation of its active center dithiol to a disulfide and catalyzes dithiol-disulfide exchange reactions. This chain is Thioredoxin (trxA), found in Pyropia yezoensis (Susabi-nori).